The primary structure comprises 64 residues: Peptide Ctri9677 (64 aa).

Residues 1-22 (MKNNTILFTFLIVFLIASQIEA) form the signal peptide. Leucine amide is present on L36. Residues 40-64 (SEDREFFDFFTDDNLAALEKALKEY) constitute a propeptide that is removed on maturation.

The protein belongs to the non-disulfide-bridged peptide (NDBP) superfamily. Short antimicrobial peptide (group 4) family. As to expression, expressed by the venom gland.

The protein resides in the secreted. Antimicrobial peptide. In Chaerilus tricostatus (Scorpion), this protein is Peptide Ctri9677.